Reading from the N-terminus, the 233-residue chain is GSK-3-binding protein FRAT2 (233 aa).

The segment at 1-24 is disordered; that stretch reads MPCRREEEEEAGEEAEGEEEEDDS. The segment covering 7-24 has biased composition (acidic residues); it reads EEEEAGEEAEGEEEEDDS. Positions 174–196 are involved in GSK-3 binding; the sequence is DPHRLLQQLVLSGNLIKEAVRRL. A disordered region spans residues 204 to 233; the sequence is AATGPASAPGPGGGRSGPDRIALQPSGSLL.

Belongs to the GSK-3-binding protein family. Binds GSK-3 and prevents GSK-3-dependent phosphorylation.

In terms of biological role, positively regulates the Wnt signaling pathway by stabilizing beta-catenin through the association with GSK-3. This chain is GSK-3-binding protein FRAT2 (FRAT2), found in Homo sapiens (Human).